The following is a 450-amino-acid chain: Putative cysteine--tRNA ligase 2 (450 aa).

Residues 29–39 (ITPYKSTHLGH) carry the 'HIGH' region motif. The short motif at 270–274 (KMSKS) is the 'KMSKS' region element. Lys273 provides a ligand contact to ATP. Residues 372–392 (PIHPKHSPQMRDYSEHGSAGQ) are disordered.

This sequence belongs to the class-I aminoacyl-tRNA synthetase family. Monomer.

The protein localises to the cytoplasm. It carries out the reaction tRNA(Cys) + L-cysteine + ATP = L-cysteinyl-tRNA(Cys) + AMP + diphosphate. This Tropheryma whipplei (strain TW08/27) (Whipple's bacillus) protein is Putative cysteine--tRNA ligase 2 (cysS2).